A 954-amino-acid polypeptide reads, in one-letter code: Regulatory protein FlaEY (954 aa).

Functionally, functions in trans to modulate the level of transcription of the flagellin genes and several genes encoding chemotaxis functions. It is itself temporally controlled. This chain is Regulatory protein FlaEY (flaEY), found in Caulobacter vibrioides (strain ATCC 19089 / CIP 103742 / CB 15) (Caulobacter crescentus).